The following is a 97-amino-acid chain: Citrate lyase acyl carrier protein (97 aa).

Position 14 is an O-(phosphoribosyl dephospho-coenzyme A)serine (Ser14).

The protein belongs to the CitD family. Oligomer with a subunit composition of (alpha,beta,gamma)6.

It is found in the cytoplasm. Functionally, covalent carrier of the coenzyme of citrate lyase. In Oenococcus oeni (strain ATCC BAA-331 / PSU-1), this protein is Citrate lyase acyl carrier protein.